A 424-amino-acid polypeptide reads, in one-letter code: Glycerol-3-phosphate dehydrogenase [NAD(+)] (424 aa).

NAD(+) contacts are provided by residues 79-84 (GSGNWG), Phe111, and Phe167. A substrate-binding site is contributed by Lys190. Residue Ala223 participates in NAD(+) binding. Catalysis depends on Lys283, which acts as the Proton acceptor. 2 residues coordinate NAD(+): Arg348 and Gln377. 348–349 (RN) provides a ligand contact to substrate.

The protein belongs to the NAD-dependent glycerol-3-phosphate dehydrogenase family.

The enzyme catalyses sn-glycerol 3-phosphate + NAD(+) = dihydroxyacetone phosphate + NADH + H(+). This chain is Glycerol-3-phosphate dehydrogenase [NAD(+)] (GPD), found in Eremothecium gossypii (strain ATCC 10895 / CBS 109.51 / FGSC 9923 / NRRL Y-1056) (Yeast).